The primary structure comprises 124 residues: Histone H2B, embryonic (124 aa).

Residues M1–K31 are disordered. O-linked (GlcNAc) serine glycosylation occurs at S111. A Glycyl lysine isopeptide (Lys-Gly) (interchain with G-Cter in ubiquitin) cross-link involves residue K119.

It belongs to the histone H2B family. In terms of assembly, the nucleosome is a histone octamer containing two molecules each of H2A, H2B, H3 and H4 assembled in one H3-H4 heterotetramer and two H2A-H2B heterodimers. The octamer wraps approximately 147 bp of DNA. Monoubiquitination of Lys-119 gives a specific tag for epigenetic transcriptional activation and is also prerequisite for histone H3 'Lys-4' and 'Lys-79' methylation. Post-translationally, glcNAcylation at Ser-111 promotes monoubiquitination of Lys-119. It fluctuates in response to extracellular glucose, and associates with transcribed genes.

The protein localises to the nucleus. Its subcellular location is the chromosome. Functionally, core component of nucleosome. Nucleosomes wrap and compact DNA into chromatin, limiting DNA accessibility to the cellular machineries which require DNA as a template. Histones thereby play a central role in transcription regulation, DNA repair, DNA replication and chromosomal stability. DNA accessibility is regulated via a complex set of post-translational modifications of histones, also called histone code, and nucleosome remodeling. This Strongylocentrotus purpuratus (Purple sea urchin) protein is Histone H2B, embryonic.